The primary structure comprises 142 residues: Large ribosomal subunit protein uL11 (142 aa).

The protein belongs to the universal ribosomal protein uL11 family. As to quaternary structure, part of the ribosomal stalk of the 50S ribosomal subunit. Interacts with L10 and the large rRNA to form the base of the stalk. L10 forms an elongated spine to which L12 dimers bind in a sequential fashion forming a multimeric L10(L12)X complex. One or more lysine residues are methylated.

Forms part of the ribosomal stalk which helps the ribosome interact with GTP-bound translation factors. The chain is Large ribosomal subunit protein uL11 from Desulfitobacterium hafniense (strain DSM 10664 / DCB-2).